The sequence spans 512 residues: Colistin resistance protein EmrB (512 aa).

Transmembrane regions (helical) follow at residues 17 to 37 (WAIF…IQIV), 55 to 75 (VTWV…MSSI), 84 to 104 (VYYT…ALSW), 115 to 135 (IQGF…YLLF), 144 to 164 (LVMF…IGGW), 169 to 189 (FSWH…ATVI), 205 to 225 (SMDW…EYFL), 234 to 254 (LADT…MIFF), 280 to 300 (ITTF…PVFL), 314 to 334 (VMMV…WLIP), 341 to 361 (TVFV…HLSI), 376 to 396 (GIGL…TLPL), 412 to 432 (IGGA…TAMH), and 486 to 506 (FNDL…LTIF).

This sequence belongs to the major facilitator superfamily. EmrB family.

It localises to the cell inner membrane. Probably part of an efflux pump system that contributes to adaptation to osmotic stress and resistance to colistin. The sequence is that of Colistin resistance protein EmrB from Acinetobacter baumannii (strain ATCC 17978 / DSM 105126 / CIP 53.77 / LMG 1025 / NCDC KC755 / 5377).